Consider the following 238-residue polypeptide: Anti-sigma-K factor RskA (238 aa).

Residues 1 to 97 lie on the Cytoplasmic side of the membrane; sequence MTSPQNDLLS…RSSSRRRAAA (97 aa). A helical transmembrane segment spans residues 98–118; the sequence is VLSAAAAVVIGLGTLAVGYAL. Over 119–238 the chain is Extracellular; the sequence is RPAPTPSTAE…TPVFAELPLT (120 aa).

The protein belongs to the anti-sigma-K factor family.

Its subcellular location is the cell membrane. In terms of biological role, an anti-sigma factor for extracytoplasmic function (ECF) sigma factor SigK. ECF sigma factors are held in an inactive form by an anti-sigma factor until released by regulated intramembrane proteolysis (RIP). RIP occurs when an extracytoplasmic signal triggers a concerted proteolytic cascade to transmit information and elicit cellular responses. The membrane-spanning regulatory substrate protein is first cut extracytoplasmically (site-1 protease, S1P), then within the membrane itself (site-2 protease, S2P, Rip1), while cytoplasmic proteases finish degrading the regulatory protein, liberating the sigma factor. This is Anti-sigma-K factor RskA (rskA) from Mycolicibacterium vanbaalenii (strain DSM 7251 / JCM 13017 / BCRC 16820 / KCTC 9966 / NRRL B-24157 / PYR-1) (Mycobacterium vanbaalenii).